Reading from the N-terminus, the 437-residue chain is Methylenetetrahydrofolate--tRNA-(uracil-5-)-methyltransferase TrmFO (437 aa).

10–15 (GAGLAG) provides a ligand contact to FAD.

Belongs to the MnmG family. TrmFO subfamily. FAD is required as a cofactor.

It localises to the cytoplasm. It catalyses the reaction uridine(54) in tRNA + (6R)-5,10-methylene-5,6,7,8-tetrahydrofolate + NADH + H(+) = 5-methyluridine(54) in tRNA + (6S)-5,6,7,8-tetrahydrofolate + NAD(+). It carries out the reaction uridine(54) in tRNA + (6R)-5,10-methylene-5,6,7,8-tetrahydrofolate + NADPH + H(+) = 5-methyluridine(54) in tRNA + (6S)-5,6,7,8-tetrahydrofolate + NADP(+). Catalyzes the folate-dependent formation of 5-methyl-uridine at position 54 (M-5-U54) in all tRNAs. The polypeptide is Methylenetetrahydrofolate--tRNA-(uracil-5-)-methyltransferase TrmFO (Lysinibacillus sphaericus (strain C3-41)).